The chain runs to 49 residues: Large ribosomal subunit protein bL33 (49 aa).

It belongs to the bacterial ribosomal protein bL33 family.

The sequence is that of Large ribosomal subunit protein bL33 from Fervidobacterium nodosum (strain ATCC 35602 / DSM 5306 / Rt17-B1).